Here is a 749-residue protein sequence, read N- to C-terminus: Meiotically up-regulated gene 122 protein (749 aa).

Residues 1–20 (MYRKWDLCITRHLLPYIEHS) lie on the Cytoplasmic side of the membrane. The helical; Signal-anchor for type II membrane protein transmembrane segment at 21–41 (VIPIIALLVLSLIFYILYICF) threads the bilayer. Residues 42–749 (GTTSYILSGI…LLSNALRSII (708 aa)) lie on the Lumenal side of the membrane. The region spanning 88 to 261 (PPELEAPLQL…CIILYFSSSE (174 aa)) is the PXA domain. The PX domain maps to 311–422 (LHYQFLKEAS…KFFAKSMRSH (112 aa)). Disordered regions lie at residues 439-489 (QSSS…LSQQ) and 504-546 (GSCT…PPKP). 2 stretches are compositionally biased toward polar residues: residues 440 to 461 (SSSV…NKTS) and 475 to 489 (LSHQ…LSQQ).

Belongs to the sorting nexin family.

Its subcellular location is the endoplasmic reticulum membrane. In terms of biological role, has a role in meiosis. The chain is Meiotically up-regulated gene 122 protein (mug122) from Schizosaccharomyces pombe (strain 972 / ATCC 24843) (Fission yeast).